The following is a 230-amino-acid chain: Protein FAM3A (230 aa).

An N-terminal signal peptide occupies residues 1–33; it reads MRLAGPLRIVALIIIMGLTWILVTILLGGPGVG. Disulfide bonds link C59/C87 and C65/C222. The GG-type lectin domain occupies 68 to 226; sequence EHLSFRIVSG…LEMEGCIPRR (159 aa).

The protein belongs to the FAM3 family.

It localises to the secreted. The chain is Protein FAM3A (Fam3a) from Mus musculus (Mouse).